A 148-amino-acid chain; its full sequence is Arginine repressor (148 aa).

Belongs to the ArgR family.

It localises to the cytoplasm. Its pathway is amino-acid biosynthesis; L-arginine biosynthesis [regulation]. In terms of biological role, regulates arginine biosynthesis genes. The chain is Arginine repressor from Chlorobium phaeovibrioides (strain DSM 265 / 1930) (Prosthecochloris vibrioformis (strain DSM 265)).